A 130-amino-acid polypeptide reads, in one-letter code: Small ribosomal subunit protein uS8 (130 aa).

This sequence belongs to the universal ribosomal protein uS8 family. Part of the 30S ribosomal subunit. Contacts proteins S5 and S12.

Functionally, one of the primary rRNA binding proteins, it binds directly to 16S rRNA central domain where it helps coordinate assembly of the platform of the 30S subunit. This Cellvibrio japonicus (strain Ueda107) (Pseudomonas fluorescens subsp. cellulosa) protein is Small ribosomal subunit protein uS8.